A 539-amino-acid polypeptide reads, in one-letter code: Phosphatidylinositol 4-phosphate 5-kinase type-1 beta (539 aa).

The tract at residues 1 to 21 (MSSTAENGDAVPGKQNEEKTY) is disordered. One can recognise a PIPK domain in the interval 25–395 (ASSAIKGAIQ…RFLKFMNSRV (371 aa)). A phosphoserine mark is found at Ser-445, Ser-447, and Ser-448.

As to quaternary structure, interacts with RAC1, AJUBA, PLD1, PLD2 and ARF1. As to expression, highly expressed in brain and testis. Barely detectable in liver and skeletal muscle.

It localises to the cytoplasm. Its subcellular location is the cytosol. It is found in the cell membrane. The protein resides in the endomembrane system. The enzyme catalyses a 1,2-diacyl-sn-glycero-3-phospho-(1D-myo-inositol 4-phosphate) + ATP = a 1,2-diacyl-sn-glycero-3-phospho-(1D-myo-inositol-4,5-bisphosphate) + ADP + H(+). The catalysed reaction is 1-octadecanoyl-2-(5Z,8Z,11Z,14Z)-eicosatetraenoyl-sn-glycero-3-phospho-1D-myo-inositol 4-phosphate + ATP = 1-octadecanoyl-2-(5Z,8Z,11Z,14Z)-eicosatetraenoyl-sn-glycero-3-phospho-1D-myo-inositol 4,5-bisphosphate + ADP + H(+). It catalyses the reaction 1-octadecanoyl-2-(9Z)-octadecenoyl-sn-glycero-3-phospho-1D-myo-inositol 4-phosphate + ATP = 1-octadecanoyl-2-(9Z)-octadecenoyl-sn-glycero-3-phospho-1D-myo-inositol 4,5-bisphosphate + ADP + H(+). It carries out the reaction 1-octadecanoyl-2-(9Z)-octadecenoyl-sn-glycero-3-phospho-1D-myo-inositol + ATP = 1-octadecanoyl-2-(9Z)-octadecenoyl-sn-glycero-3-phospho-1D-myo-inositol 5-phosphate + ADP + H(+). The enzyme catalyses 1-octadecanoyl-2-(9Z,12Z)-octadecadienoyl-sn-glycero-3-phospho-1D-myo-inositol + ATP = 1-octadecanoyl-2-(9Z,12Z)-octadecadienoyl-sn-glycero-3-phospho-1D-myo-inositol 5-phosphate + ADP + H(+). The catalysed reaction is 1-octadecanoyl-2-(5Z,8Z,11Z,14Z-eicosatetraenoyl)-sn-glycero-3-phospho-(1D-myo-inositol) + ATP = 1-octadecanoyl-2-(5Z,8Z,11Z,14Z)-eicosatetraenoyl-sn-glycero-3-phospho-1D-myo-inositol 5-phosphate + ADP + H(+). It catalyses the reaction 1,2-di-(9Z,12Z)-octadecadienoyl-sn-glycero-3-phospho-1D-myo-inositol + ATP = 1,2-di(9Z,12Z)-octadecadienoyl-sn-glycero-3-phospho-1D-myo-inositol 5-phosphate + ADP + H(+). Its activity is regulated as follows. Activated by phosphatidic acid. Functionally, catalyzes the phosphorylation of phosphatidylinositol 4-phosphate (PtdIns(4)P/PI4P) to form phosphatidylinositol 4,5-bisphosphate (PtdIns(4,5)P2/PIP2), a lipid second messenger that regulates several cellular processes such as signal transduction, vesicle trafficking, actin cytoskeleton dynamics, cell adhesion, and cell motility. PtdIns(4,5)P2 can directly act as a second messenger or can be utilized as a precursor to generate other second messengers: inositol 1,4,5-trisphosphate (IP3), diacylglycerol (DAG) or phosphatidylinositol-3,4,5-trisphosphate (PtdIns(3,4,5)P3/PIP3). Mediates RAC1-dependent reorganization of actin filaments. Contributes to the activation of phospholipase PLD2. Together with PIP5K1A, is required, after stimulation by G-protein coupled receptors, for the synthesis of IP3 that will induce stable platelet adhesion. The chain is Phosphatidylinositol 4-phosphate 5-kinase type-1 beta from Mus musculus (Mouse).